The following is a 396-amino-acid chain: L-lactate dehydrogenase (396 aa).

The 380-residue stretch at methionine 1 to glycine 380 folds into the FMN hydroxy acid dehydrogenase domain. Tyrosine 24 provides a ligand contact to substrate. Serine 106 and glutamine 127 together coordinate FMN. A substrate-binding site is contributed by tyrosine 129. Threonine 155 is an FMN binding site. Arginine 164 is a binding site for substrate. Lysine 251 contributes to the FMN binding site. The Proton acceptor role is filled by histidine 275. Position 278 (arginine 278) interacts with substrate. Aspartate 306 to arginine 330 lines the FMN pocket.

Belongs to the FMN-dependent alpha-hydroxy acid dehydrogenase family. The cofactor is FMN.

The protein localises to the cell inner membrane. It catalyses the reaction (S)-lactate + A = pyruvate + AH2. Its function is as follows. Catalyzes the conversion of L-lactate to pyruvate. Is coupled to the respiratory chain. The chain is L-lactate dehydrogenase from Salmonella paratyphi A (strain ATCC 9150 / SARB42).